The chain runs to 535 residues: Ribonuclease Y (535 aa).

A helical membrane pass occupies residues 4–24; the sequence is IILLIVSALIGLILGYALISI. The disordered stretch occupies residues 118-141; it reads ENLSSKEKVLDSKEQSLTDKSKHI. In terms of domain architecture, KH spans 225–285; the sequence is TITSVHLPDD…IRREIARMTL (61 aa). The HD domain occupies 351–444; that stretch reads VLRHSVEVGK…VAAADALSSA (94 aa).

This sequence belongs to the RNase Y family.

It is found in the cell membrane. Functionally, endoribonuclease that initiates mRNA decay. The sequence is that of Ribonuclease Y from Streptococcus pyogenes serotype M18 (strain MGAS8232).